Reading from the N-terminus, the 588-residue chain is Interferon-activable protein 208 (588 aa).

Positions 5 to 92 (MVNYYKQIVL…VDILRKEMEK (88 aa)) constitute a Pyrin domain. Disordered stretches follow at residues 157-183 (ATST…SLQT) and 469-526 (EMQN…RRVN). 2 stretches are compositionally biased toward polar residues: residues 172-183 (RFPTTASSSLQT) and 470-487 (MQNP…QPRL).

This sequence belongs to the HIN-200 family.

This chain is Interferon-activable protein 208, found in Mus musculus (Mouse).